The primary structure comprises 312 residues: Acetylglutamate kinase (312 aa).

Substrate contacts are provided by residues 76 to 77 (GG), Arg98, and Asn199.

The protein belongs to the acetylglutamate kinase family. ArgB subfamily.

The protein localises to the cytoplasm. It catalyses the reaction N-acetyl-L-glutamate + ATP = N-acetyl-L-glutamyl 5-phosphate + ADP. It functions in the pathway amino-acid biosynthesis; L-arginine biosynthesis; N(2)-acetyl-L-ornithine from L-glutamate: step 2/4. Catalyzes the ATP-dependent phosphorylation of N-acetyl-L-glutamate. In Beutenbergia cavernae (strain ATCC BAA-8 / DSM 12333 / CCUG 43141 / JCM 11478 / NBRC 16432 / NCIMB 13614 / HKI 0122), this protein is Acetylglutamate kinase.